The sequence spans 305 residues: Oxidoreductase swnR (305 aa).

It belongs to the NmrA-type oxidoreductase family. Isoflavone reductase subfamily.

The catalysed reaction is L-pipecolate + O2 = L-1-piperideine-6-carboxylate + H2O2 + H(+). It functions in the pathway mycotoxin biosynthesis. Its function is as follows. Oxidoreductase; part of the gene cluster that mediates the biosynthesis of swainsonine (SW), a cytotoxic fungal alkaloid and a potential cancer therapy drug. Swainsonine production occurs via a multibranched pathway and is dispensable for fungal colonization of plants and infection of insect hosts. The first step of swainsonine biosynthesis is the production of the precursor pipecolic acid (PA) via conversion of L-lysine (Lys) to 1-piperideine-6-carboxylate (P6C) by the aminotransferase swnA, the latter being further reduced to PA by the reductase swnR. The PKS-NRPS hybrid synthetase swnK uptakes and condensates PA and malonyl-CoA with and without skipping of the ketoreductase (KR) domain in order to produce 3 intermediates, 1-oxoindolizidine, (1S)-1-hydroxyindolizin, and (1R)-1-hydroxyindolizine; with the transisomer (1S)-1-hydroxyindolizin being predominant. The terminal thioester reductase (TE) domain of swnK is involved in reduction of the thioester bond to release the intermediate aldehydes. The oxidoreductase swnN could contribute to the reduction of 1-oxoindolizidine to (1S)-1-hydroxyindolizin and (1R)-1-hydroxyindolizine, contributing to the major route of SW production. The dioxygenase swnH2 would be responsible for the oxidization of (1R)-1-hydroxyindolizine into (1R,2S)-1,2-dihydroxyindolizine and of (1S)-1-hydroxyindolizin to yield both (1R,2S)-1,2-dihydroxyindolizine and (1S,2S)-1,2-dihydroxyindolizine. The dioxygenase swnH1 then performs the conversion of the 1,2-dihydroxyindolizine epimers to SW. The polypeptide is Oxidoreductase swnR (Arthroderma benhamiae (strain ATCC MYA-4681 / CBS 112371) (Trichophyton mentagrophytes)).